A 74-amino-acid polypeptide reads, in one-letter code: Exodeoxyribonuclease 7 small subunit (74 aa).

Belongs to the XseB family. As to quaternary structure, heterooligomer composed of large and small subunits.

It is found in the cytoplasm. It carries out the reaction Exonucleolytic cleavage in either 5'- to 3'- or 3'- to 5'-direction to yield nucleoside 5'-phosphates.. Bidirectionally degrades single-stranded DNA into large acid-insoluble oligonucleotides, which are then degraded further into small acid-soluble oligonucleotides. The chain is Exodeoxyribonuclease 7 small subunit from Glaesserella parasuis serovar 5 (strain SH0165) (Haemophilus parasuis).